We begin with the raw amino-acid sequence, 266 residues long: Sesquipedalian-1 (266 aa).

The PH domain maps to 17 to 113 (PVDNAGFLYK…WVKALSRASF (97 aa)). A disordered region spans residues 165 to 184 (QPSVAPQRPPPLPPRRRASA). Position 183 is a phosphoserine (Ser183). The short motif at 191–203 (SFAQLHARYGLEV) is the F&amp;H element.

It belongs to the sesquipedalian family. In terms of assembly, forms homodimers and heterodimers with PHETA2. Interacts with OCRL and INPP5B. Interaction with OCRL may be important for endosomal morphology and function.

It is found in the early endosome. The protein resides in the recycling endosome. Its subcellular location is the golgi apparatus. The protein localises to the trans-Golgi network. It localises to the cytoplasmic vesicle. It is found in the clathrin-coated vesicle. In terms of biological role, plays a role in endocytic trafficking. Required for receptor recycling from endosomes, both to the trans-Golgi network and the plasma membrane. The sequence is that of Sesquipedalian-1 from Mus musculus (Mouse).